The primary structure comprises 196 residues: GTP cyclohydrolase-2 (196 aa).

Position 49 to 53 (49 to 53) interacts with GTP; sequence RVHSE. Residues cysteine 54, cysteine 65, and cysteine 67 each contribute to the Zn(2+) site. Residues glutamine 70, 92 to 94, and threonine 114 contribute to the GTP site; that span reads EGR. Aspartate 126 serves as the catalytic Proton acceptor. The active-site Nucleophile is the arginine 128. Positions 149 and 154 each coordinate GTP.

The protein belongs to the GTP cyclohydrolase II family. In terms of assembly, homodimer. Requires Zn(2+) as cofactor.

It catalyses the reaction GTP + 4 H2O = 2,5-diamino-6-hydroxy-4-(5-phosphoribosylamino)-pyrimidine + formate + 2 phosphate + 3 H(+). Its pathway is cofactor biosynthesis; riboflavin biosynthesis; 5-amino-6-(D-ribitylamino)uracil from GTP: step 1/4. In terms of biological role, catalyzes the conversion of GTP to 2,5-diamino-6-ribosylamino-4(3H)-pyrimidinone 5'-phosphate (DARP), formate and pyrophosphate. This Citrobacter koseri (strain ATCC BAA-895 / CDC 4225-83 / SGSC4696) protein is GTP cyclohydrolase-2.